A 666-amino-acid polypeptide reads, in one-letter code: tRNA 5-methylaminomethyl-2-thiouridine biosynthesis bifunctional protein MnmC (666 aa).

Positions 1 to 253 are tRNA (mnm(5)s(2)U34)-methyltransferase; sequence MSSPFVPIIT…KRHMICAHYE (253 aa). An FAD-dependent cmnm(5)s(2)U34 oxidoreductase region spans residues 283–666; sequence VGGGLAGCFI…FLRKKIIQGP (384 aa).

This sequence in the N-terminal section; belongs to the methyltransferase superfamily. tRNA (mnm(5)s(2)U34)-methyltransferase family. It in the C-terminal section; belongs to the DAO family. FAD serves as cofactor.

The protein localises to the cytoplasm. The enzyme catalyses 5-aminomethyl-2-thiouridine(34) in tRNA + S-adenosyl-L-methionine = 5-methylaminomethyl-2-thiouridine(34) in tRNA + S-adenosyl-L-homocysteine + H(+). Catalyzes the last two steps in the biosynthesis of 5-methylaminomethyl-2-thiouridine (mnm(5)s(2)U) at the wobble position (U34) in tRNA. Catalyzes the FAD-dependent demodification of cmnm(5)s(2)U34 to nm(5)s(2)U34, followed by the transfer of a methyl group from S-adenosyl-L-methionine to nm(5)s(2)U34, to form mnm(5)s(2)U34. In Legionella pneumophila subsp. pneumophila (strain Philadelphia 1 / ATCC 33152 / DSM 7513), this protein is tRNA 5-methylaminomethyl-2-thiouridine biosynthesis bifunctional protein MnmC.